The chain runs to 446 residues: MSGYEINFDGLVGPTHHYAGLSFGNEASTKNRNHLSNPKLAAKQGLLKMKALADMGMKQGVLAPQERPHVPSLRKLGFGGDDHAVITQAMRTSPELLSALSSASCMWTANAATVSPSADSADGRVHFTAANLNNKFHRSIEHETTSQILAAIFRDERYFAHHLALPPVALFGDEGAANHNRLGGPYDSAAVQVFVYGQQFLGGQVAPKRYPARQSLEACQAVARLHQLDSNRTVFVQQNPDVIDEGVFHNDVIAVSNQQVLFHHQKAFFNQAQALNEIREKMALLEQDLIAIEVPDQRVSVGDAVSTYLFNSQLITRPDGGMTIVVPEESRQNLAVWSYLNDMIQMGTPVDQIKVFDLRESMRNGGGPACLRLRVAVNDAEFNAINHNVLMNDALFARLNTWVDRRYRDQLSHQDLADPALLIESRSALDELTQILNLGSVYHFQQ.

Residues 19–28 (AGLSFGNEAS), asparagine 110, and 137–138 (HR) each bind substrate. Residue glutamate 174 is part of the active site. Arginine 213 serves as a coordination point for substrate. Histidine 249 is an active-site residue. Substrate contacts are provided by aspartate 251 and asparagine 364. The Nucleophile role is filled by cysteine 370.

Belongs to the succinylarginine dihydrolase family. In terms of assembly, homodimer.

The catalysed reaction is N(2)-succinyl-L-arginine + 2 H2O + 2 H(+) = N(2)-succinyl-L-ornithine + 2 NH4(+) + CO2. It participates in amino-acid degradation; L-arginine degradation via AST pathway; L-glutamate and succinate from L-arginine: step 2/5. In terms of biological role, catalyzes the hydrolysis of N(2)-succinylarginine into N(2)-succinylornithine, ammonia and CO(2). This chain is N-succinylarginine dihydrolase, found in Acinetobacter baylyi (strain ATCC 33305 / BD413 / ADP1).